The primary structure comprises 216 residues: MRNAAGLFMIIEPDKAVLLCARRAYRSANAPAADMNDTFLEKISIPRGHRDCCDAKVYETAVREFVEETGRFFDSAFIYKLPFTLQWKDDGVTYKYLIYVGVVRGNLINVNAKPNTYTVKLLPGTFGNDYRIMLKPRRFNCEIARSLAIVPLNKYFNYMNDKQLITYDYSNYIEFFDFVRSVKARFDNRQLQDFFYATLKKIDNDAPQKLHALRRV.

The Nudix hydrolase domain occupies 1 to 177 (MRNAAGLFMI…DYSNYIEFFD (177 aa)). The Nudix box motif lies at 48 to 70 (GHRDCCDAKVYETAVREFVEETG).

It is found in the host cytoplasm. Its subcellular location is the host nucleus. The enzyme catalyses ADP-D-ribose + H2O = D-ribose 5-phosphate + AMP + 2 H(+). Functionally, plays an important role in virus replication most probably through its hydrolyzing ADP-ribose activity in host cells. May function in viral DNA replication or transcription directly, or by removing toxic substances or metabolic intermediates. This Lepidoptera (butterflies and moths) protein is Protein ADP-ribose pyrophosphatase ORF38.